A 169-amino-acid chain; its full sequence is Disulfide bond formation protein B (169 aa).

Topologically, residues 1 to 13 (MQALNHFSRIRLS) are cytoplasmic. The helical transmembrane segment at 14-30 (WFLLLLCIIFFEASALT) threads the bilayer. Topologically, residues 31–48 (FQHIMKLPPCVMCIYERV) are periplasmic. An intrachain disulfide couples Cys-40 to Cys-43. The helical transmembrane segment at 49-64 (AMMGIGGAAIIGLLNP) threads the bilayer. The Cytoplasmic portion of the chain corresponds to 65 to 71 (NNLIIRW). Residues 72–89 (CGFIAWGISAGWGLKLAL) form a helical membrane-spanning segment. At 90 to 144 (EHVDFQLNPSPFSTCDLFVTFPSWAPLNKWAPWMFEAYGDCSKIVWQFLTLTMPQ) the chain is on the periplasmic side. Cys-104 and Cys-130 are oxidised to a cystine. A helical transmembrane segment spans residues 145–163 (WLVIIFAGNLIALAIFVIA). Topologically, residues 164 to 169 (QFFNKK) are cytoplasmic.

It belongs to the DsbB family.

It localises to the cell inner membrane. Functionally, required for disulfide bond formation in some periplasmic proteins. Acts by oxidizing the DsbA protein. The protein is Disulfide bond formation protein B of Aliivibrio fischeri (strain ATCC 700601 / ES114) (Vibrio fischeri).